Here is a 228-residue protein sequence, read N- to C-terminus: Protein Iojap, chloroplastic (228 aa).

Positions 1-54 (MGGTSAAVPSHGLACAPPAAVTLNPRARRRRASSGSGGHRSSPQQPLRSDLLPP) are disordered. The N-terminal 62 residues, 1–62 (MGGTSAAVPS…PPATVACRAR (62 aa)), are a transit peptide targeting the chloroplast.

The protein belongs to the Iojap/RsfS family. In terms of assembly, interacts with chloroplast ribosomal protein uL14c (rpl14).

The protein resides in the plastid. The protein localises to the chloroplast. Functionally, may be a ribosome silencing factor (Potential). Involved in plastid biogenesis. Plastids affected by a mutation in Iojap lose the ability to perform translation and lack plastid ribosomes. The protein is Protein Iojap, chloroplastic (Ij) of Zea mays (Maize).